We begin with the raw amino-acid sequence, 87 residues long: Small ribosomal subunit protein uS17 (87 aa).

The protein belongs to the universal ribosomal protein uS17 family. As to quaternary structure, part of the 30S ribosomal subunit.

In terms of biological role, one of the primary rRNA binding proteins, it binds specifically to the 5'-end of 16S ribosomal RNA. In Staphylococcus aureus (strain JH1), this protein is Small ribosomal subunit protein uS17.